Here is a 60-residue protein sequence, read N- to C-terminus: Hemocyte defensin Cg-Defh1 (60 aa).

Residues 1–17 form the signal peptide; the sequence is LFTLVVLLMVSADMAFA. Positions 19, 20, and 21 each coordinate beta-D-GlcNAc-(1-&gt;4)-Mur2Ac(oyl-L-Ala-gamma-D-Glu-L-Lys-D-Ala-D-Ala)-di-trans,octa-cis-undecaprenyl diphosphate. Disulfide bonds link cysteine 21–cysteine 42, cysteine 28–cysteine 51, cysteine 32–cysteine 53, and cysteine 37–cysteine 56. Residues 22–25 are binds to membrane interface; it reads PRDQ. Histidine 31 provides a ligand contact to beta-D-GlcNAc-(1-&gt;4)-Mur2Ac(oyl-L-Ala-gamma-D-Glu-L-Lys-D-Ala-D-Ala)-di-trans,octa-cis-undecaprenyl diphosphate. Residues 43-49 are binds to membrane interface; it reads DAVTLWL. Cysteine 51 provides a ligand contact to beta-D-GlcNAc-(1-&gt;4)-Mur2Ac(oyl-L-Ala-gamma-D-Glu-L-Lys-D-Ala-D-Ala)-di-trans,octa-cis-undecaprenyl diphosphate.

Belongs to the invertebrate defensin family. In terms of tissue distribution, expressed in hemocytes.

It localises to the secreted. It is found in the target cell membrane. Functionally, antibacterial peptide mostly active against Gram-positive bacteria. It acts by selectively inhibiting peptidoglycan biosynthesis through complex formation with the cell wall precursor lipid II (1:1 molar ratio) thus inhibiting cell wall synthesis. It does not disrupt cell membranes. Is noticeably less potent than Cg-Defh2 and Cg-Defm. Shows no or limited activities against Gram-negative bacteria. This is Hemocyte defensin Cg-Defh1 from Magallana gigas (Pacific oyster).